The sequence spans 175 residues: General odorant-binding protein 84a (175 aa).

Positions 1 to 24 (MYSALVRACAVIAFLILSPNCARA) are cleaved as a signal peptide. 2 cysteine pairs are disulfide-bonded: Cys-103–Cys-151 and Cys-140–Cys-160.

As to expression, present only in a small number of hairs scattered over the surface of the funiculus.

It localises to the secreted. This Drosophila melanogaster (Fruit fly) protein is General odorant-binding protein 84a (Obp84a).